A 393-amino-acid chain; its full sequence is Formate-dependent phosphoribosylglycinamide formyltransferase (393 aa).

N(1)-(5-phospho-beta-D-ribosyl)glycinamide contacts are provided by residues 22-23 and Glu-82; that span reads EL. Residues Arg-114, Lys-155, 160–165, 195–198, and Glu-203 contribute to the ATP site; these read SSGHGQ and EGFV. Residues 119 to 308 enclose the ATP-grasp domain; that stretch reads RLAAEELGLP…EFALHARAIL (190 aa). The Mg(2+) site is built by Glu-267 and Glu-279. N(1)-(5-phospho-beta-D-ribosyl)glycinamide contacts are provided by residues Asp-286, Lys-356, and 363-364; that span reads RR.

The protein belongs to the PurK/PurT family. In terms of assembly, homodimer.

It catalyses the reaction N(1)-(5-phospho-beta-D-ribosyl)glycinamide + formate + ATP = N(2)-formyl-N(1)-(5-phospho-beta-D-ribosyl)glycinamide + ADP + phosphate + H(+). The protein operates within purine metabolism; IMP biosynthesis via de novo pathway; N(2)-formyl-N(1)-(5-phospho-D-ribosyl)glycinamide from N(1)-(5-phospho-D-ribosyl)glycinamide (formate route): step 1/1. In terms of biological role, involved in the de novo purine biosynthesis. Catalyzes the transfer of formate to 5-phospho-ribosyl-glycinamide (GAR), producing 5-phospho-ribosyl-N-formylglycinamide (FGAR). Formate is provided by PurU via hydrolysis of 10-formyl-tetrahydrofolate. The sequence is that of Formate-dependent phosphoribosylglycinamide formyltransferase from Pasteurella multocida (strain Pm70).